Here is a 167-residue protein sequence, read N- to C-terminus: MKRLHKRFLLATFCALFTATLQAADVTITVNGRVVAKPCTIQTKEANVNLGDLYTRNLQQPGSASGWHNITLSLTDCPVETSAVTAIVTGSTDNTGYYKNEGTAENIQIELRDDQDAALKNGDSKTVIVDEITRNAQFPLKARAITVNGNASQGTIEALINVIYTWQ.

The N-terminal stretch at 1–23 is a signal peptide; it reads MKRLHKRFLLATFCALFTATLQA. C39 and C77 are oxidised to a cystine.

This sequence belongs to the fimbrial protein family.

Its subcellular location is the fimbrium. This is an uncharacterized protein from Escherichia coli (strain K12).